The sequence spans 74 residues: Exodeoxyribonuclease 7 small subunit (74 aa).

The protein belongs to the XseB family. Heterooligomer composed of large and small subunits.

The protein localises to the cytoplasm. The enzyme catalyses Exonucleolytic cleavage in either 5'- to 3'- or 3'- to 5'-direction to yield nucleoside 5'-phosphates.. Bidirectionally degrades single-stranded DNA into large acid-insoluble oligonucleotides, which are then degraded further into small acid-soluble oligonucleotides. The sequence is that of Exodeoxyribonuclease 7 small subunit from Neisseria gonorrhoeae (strain ATCC 700825 / FA 1090).